The primary structure comprises 197 residues: ATP-dependent Clp protease proteolytic subunit 1 (197 aa).

S96 functions as the Nucleophile in the catalytic mechanism. H121 is an active-site residue.

This sequence belongs to the peptidase S14 family. In terms of assembly, fourteen ClpP subunits assemble into 2 heptameric rings which stack back to back to give a disk-like structure with a central cavity, resembling the structure of eukaryotic proteasomes.

It localises to the cytoplasm. The enzyme catalyses Hydrolysis of proteins to small peptides in the presence of ATP and magnesium. alpha-casein is the usual test substrate. In the absence of ATP, only oligopeptides shorter than five residues are hydrolyzed (such as succinyl-Leu-Tyr-|-NHMec, and Leu-Tyr-Leu-|-Tyr-Trp, in which cleavage of the -Tyr-|-Leu- and -Tyr-|-Trp bonds also occurs).. Functionally, cleaves peptides in various proteins in a process that requires ATP hydrolysis. Has a chymotrypsin-like activity. Plays a major role in the degradation of misfolded proteins. In Synechococcus sp. (strain CC9902), this protein is ATP-dependent Clp protease proteolytic subunit 1.